Here is a 455-residue protein sequence, read N- to C-terminus: tRNA-2-methylthio-N(6)-dimethylallyladenosine synthase (455 aa).

One can recognise an MTTase N-terminal domain in the interval 18-136; sequence KLFFIQTYGC…FPEYLNRVKT (119 aa). [4Fe-4S] cluster is bound by residues Cys27, Cys63, Cys97, Cys173, Cys177, and Cys180. The Radical SAM core domain maps to 159-389; that stretch reads RKSDIKGFVT…VEIVNTGIAK (231 aa). The region spanning 392–455 is the TRAM domain; that stretch reads KDAEGKIYEV…SFSLIGEVEK (64 aa).

Belongs to the methylthiotransferase family. MiaB subfamily. As to quaternary structure, monomer. Requires [4Fe-4S] cluster as cofactor.

It is found in the cytoplasm. The enzyme catalyses N(6)-dimethylallyladenosine(37) in tRNA + (sulfur carrier)-SH + AH2 + 2 S-adenosyl-L-methionine = 2-methylsulfanyl-N(6)-dimethylallyladenosine(37) in tRNA + (sulfur carrier)-H + 5'-deoxyadenosine + L-methionine + A + S-adenosyl-L-homocysteine + 2 H(+). Its function is as follows. Catalyzes the methylthiolation of N6-(dimethylallyl)adenosine (i(6)A), leading to the formation of 2-methylthio-N6-(dimethylallyl)adenosine (ms(2)i(6)A) at position 37 in tRNAs that read codons beginning with uridine. The sequence is that of tRNA-2-methylthio-N(6)-dimethylallyladenosine synthase from Clostridium beijerinckii (strain ATCC 51743 / NCIMB 8052) (Clostridium acetobutylicum).